The following is an 829-amino-acid chain: 1,4-alpha-glucan branching enzyme GlgB (829 aa).

The active-site Nucleophile is Asp405. The active-site Proton donor is Glu458. Residues 758-829 (ASKATKVSTK…TTAKKTKDNA (72 aa)) are disordered. Low complexity-rich tracts occupy residues 778 to 789 (VKAATKSSVTKV) and 810 to 820 (VTKTAKASAKT).

The protein belongs to the glycosyl hydrolase 13 family. GlgB subfamily. Monomer.

It carries out the reaction Transfers a segment of a (1-&gt;4)-alpha-D-glucan chain to a primary hydroxy group in a similar glucan chain.. It participates in glycan biosynthesis; glycogen biosynthesis. Functionally, catalyzes the formation of the alpha-1,6-glucosidic linkages in glycogen by scission of a 1,4-alpha-linked oligosaccharide from growing alpha-1,4-glucan chains and the subsequent attachment of the oligosaccharide to the alpha-1,6 position. This chain is 1,4-alpha-glucan branching enzyme GlgB, found in Actinobacillus succinogenes (strain ATCC 55618 / DSM 22257 / CCUG 43843 / 130Z).